We begin with the raw amino-acid sequence, 1724 residues long: Protein mono-ADP-ribosyltransferase PARP4 (1724 aa).

Residues 1-94 (MVMGIFANCI…RLLDVKNYDP (94 aa)) form the BRCT domain. Positions 19-25 (PQQQKKK) match the Nuclear localization signal motif. The interval 97–123 (PLDITPPPDQKASSSEVKTEGLCPDSA) is disordered. Phosphothreonine occurs at positions 101 and 333. Positions 242 to 370 (SEQLQALLLE…ETNLSKPNPP (129 aa)) constitute a PARP alpha-helical domain. The region spanning 369–573 (PPSLAKYRAL…FSMPGDQIKD (205 aa)) is the PARP catalytic domain. The VIT domain maps to 607-735 (SSTKAGLQDA…KVLIKITYIT (129 aa)). Residues 876–1046 (EVIICLDCSS…KQIEDQMTRL (171 aa)) enclose the VWFA domain. Ser-1236 carries the post-translational modification Phosphoserine. A Nuclear localization signal motif is present at residues 1237–1249 (KRKHRKIPFSKRK). A Phosphoserine modification is found at Ser-1335. The disordered stretch occupies residues 1408-1452 (SAQSAPLQHPGGFTTRPSAGTFPELDSPQLHFSLPTDPDPIRGFG). An Asymmetric dimethylarginine modification is found at Arg-1476. Ser-1504 carries the phosphoserine modification. The interaction with the major vault protein stretch occupies residues 1562–1724 (VCIQHWQDAV…LHRVLHYSQG (163 aa)).

It belongs to the ARTD/PARP family. Component of the vault ribonucleoprotein particle, at least composed of MVP, PARP4 and one or more vault RNAs (vRNAs). Interacts with TEP1. Widely expressed; the highest levels are in the kidney; also detected in heart, placenta, lung, liver, skeletal muscle, spleen, leukocytes and pancreas.

The protein localises to the cytoplasm. The protein resides in the nucleus. It localises to the cytoskeleton. It is found in the spindle. It catalyses the reaction L-aspartyl-[protein] + NAD(+) = 4-O-(ADP-D-ribosyl)-L-aspartyl-[protein] + nicotinamide. The enzyme catalyses L-glutamyl-[protein] + NAD(+) = 5-O-(ADP-D-ribosyl)-L-glutamyl-[protein] + nicotinamide. In terms of biological role, mono-ADP-ribosyltransferase that mediates mono-ADP-ribosylation of target proteins. This Homo sapiens (Human) protein is Protein mono-ADP-ribosyltransferase PARP4.